The following is a 272-amino-acid chain: Putative MgpC-like protein MPN_366 (272 aa).

Disordered stretches follow at residues Gln-65 to Ser-84 and Gly-171 to Ser-196. Low complexity predominate over residues Asn-72 to Ser-84. Positions Gly-173–Leu-187 are enriched in polar residues.

Belongs to the MgpC family.

This chain is Putative MgpC-like protein MPN_366, found in Mycoplasma pneumoniae (strain ATCC 29342 / M129 / Subtype 1) (Mycoplasmoides pneumoniae).